The chain runs to 449 residues: COP9 signalosome complex subunit 2 (449 aa).

Residues 1–32 (MSDDEDMMYDDDEYFDDDEDQDQNDSESEGVE) form a disordered region. In terms of domain architecture, PCI spans 251 to 420 (AEKEWEKAHT…QQLELDTAKS (170 aa)).

This sequence belongs to the CSN2 family. As to quaternary structure, component of the CSN complex. The holocomplex is comprised of 8 subunits csn1-8. In the complex, it probably interacts directly with csn1, csn3, csn5, csn6, csn7 and csn8.

The protein resides in the cytoplasm. The protein localises to the nucleus. Its function is as follows. Essential component of the COP9 signalosome complex (CSN), a complex involved in various cellular and developmental processes. The CSN complex is an essential regulator of the ubiquitin (Ubl) conjugation pathway by mediating the deneddylation of the cullin subunits of E3 ligase complexes, leading to modify the Ubl ligase activity. This Dictyostelium discoideum (Social amoeba) protein is COP9 signalosome complex subunit 2 (csn2).